The primary structure comprises 447 residues: MKSPKVGFVSLGCPKALVDSERILTQLRTEGYQVASDYDGADLVVVNTCGFIESAVQESLDAIGEAMSENGRVIVTGCLGKDEDKIRQMHPNVLKVTGAAAYQDVMEAVHEYVPAPPRHNPFVDLVPEQGIRLTPKHYAYLKISEGCNHRCTFCIIPSMRGDLVSRPVGSVLEEAAALKRAGVKEVLVISQDTSAYGVDTKYKLDFWNGQPVKTKFYDMCEALGQLGIWVRLHYVYPYPHVDAVIDLMAQGKILPYLDIPFQHASPRILKLMKRPAHSENTLDRIKVWREKCPNLVIRSTFVVGFPGETEEDFQILLEWLKEAQLDRVGCFTYSPVEGATANDLPDHVSEEVKQERYERFMQVQQEISAARLQKRIGQTMTVLVDSLEDEYPVAVARSYADAPEIDGNVFVEDIDKSLVQPGQLLEVEITDADEYDLFAKLIQIKTA.

The region spanning Pro4–Pro114 is the MTTase N-terminal domain. Positions 13, 49, 78, 147, 151, and 154 each coordinate [4Fe-4S] cluster. Residues Leu133–Ala370 enclose the Radical SAM core domain. Positions Gln373–Gln443 constitute a TRAM domain.

It belongs to the methylthiotransferase family. RimO subfamily. [4Fe-4S] cluster serves as cofactor.

The protein resides in the cytoplasm. The catalysed reaction is L-aspartate(89)-[ribosomal protein uS12]-hydrogen + (sulfur carrier)-SH + AH2 + 2 S-adenosyl-L-methionine = 3-methylsulfanyl-L-aspartate(89)-[ribosomal protein uS12]-hydrogen + (sulfur carrier)-H + 5'-deoxyadenosine + L-methionine + A + S-adenosyl-L-homocysteine + 2 H(+). Its function is as follows. Catalyzes the methylthiolation of an aspartic acid residue of ribosomal protein uS12. The polypeptide is Ribosomal protein uS12 methylthiotransferase RimO (Acinetobacter baylyi (strain ATCC 33305 / BD413 / ADP1)).